Consider the following 258-residue polypeptide: UPF0246 protein NTHI1156 (258 aa).

It belongs to the UPF0246 family.

The sequence is that of UPF0246 protein NTHI1156 from Haemophilus influenzae (strain 86-028NP).